The chain runs to 914 residues: Penicillin-binding protein 1A/1B (914 aa).

Residues 1–29 (MSDQFNSREARRKANSKSSPSPKKGKKRK) form a disordered region. Topologically, residues 1–37 (MSDQFNSREARRKANSKSSPSPKKGKKRKKGGLFKKT) are cytoplasmic. Residues 38-58 (LFTLLILFVLGVVGGAVTFAV) form a helical; Signal-anchor for type II membrane protein membrane-spanning segment. Residues 59 to 914 (MVSDAPSLDE…TNSSSIEKTN (856 aa)) are Extracellular-facing. The interval 77 to 246 (STIYDKNGKE…TAYNPVKNPD (170 aa)) is transglycosylase. Glutamate 115 acts as the Proton donor; for transglycosylase activity in catalysis. Residues 329–662 (TKAQDKLDEL…PDSVVEATVE (334 aa)) are transpeptidase. Serine 390 acts as the Acyl-ester intermediate; for transpeptidase activity in catalysis. One can recognise a Fibronectin type-III domain in the interval 708 to 795 (KLSGLNVKYD…SYEVPKAEDD (88 aa)). Positions 773-914 (TAVSDDGKST…TNSSSIEKTN (142 aa)) are disordered. Basic and acidic residues predominate over residues 798–828 (KKDQQQTDDEKQDDEKTQDDTQTDDSQKDDG). The segment covering 829-840 (QTDQDQTDDSTN) has biased composition (acidic residues). 2 stretches are compositionally biased toward low complexity: residues 848–892 (NTNT…GSDT) and 900–914 (SNKT…EKTN).

It in the N-terminal section; belongs to the glycosyltransferase 51 family. This sequence in the C-terminal section; belongs to the transpeptidase family. The product expressed from the translation of the ponA gene appears as two bands on a gel (1A and 1B), but the specific amino acid sequence of each protein is unknown. In terms of processing, the N-terminus is blocked.

The protein localises to the cell membrane. It localises to the forespore inner membrane. It catalyses the reaction [GlcNAc-(1-&gt;4)-Mur2Ac(oyl-L-Ala-gamma-D-Glu-L-Lys-D-Ala-D-Ala)](n)-di-trans,octa-cis-undecaprenyl diphosphate + beta-D-GlcNAc-(1-&gt;4)-Mur2Ac(oyl-L-Ala-gamma-D-Glu-L-Lys-D-Ala-D-Ala)-di-trans,octa-cis-undecaprenyl diphosphate = [GlcNAc-(1-&gt;4)-Mur2Ac(oyl-L-Ala-gamma-D-Glu-L-Lys-D-Ala-D-Ala)](n+1)-di-trans,octa-cis-undecaprenyl diphosphate + di-trans,octa-cis-undecaprenyl diphosphate + H(+). The catalysed reaction is Preferential cleavage: (Ac)2-L-Lys-D-Ala-|-D-Ala. Also transpeptidation of peptidyl-alanyl moieties that are N-acyl substituents of D-alanine.. It functions in the pathway cell wall biogenesis; peptidoglycan biosynthesis. Cell wall formation. Synthesis of cross-linked peptidoglycan from the lipid intermediates. The enzyme has a penicillin-insensitive transglycosylase N-terminal domain (formation of linear glycan strands) and a penicillin-sensitive transpeptidase C-terminal domain (cross-linking of the peptide subunits). Required for vegetative growth. Has a partially redundant function with PBP-2A (pbpA) during spore outgrowth. This Bacillus subtilis (strain 168) protein is Penicillin-binding protein 1A/1B (ponA).